The sequence spans 309 residues: Vomeronasal type-1 receptor 46 (309 aa).

At 1-20 the chain is on the extracellular side; sequence MNKANIFCTDTNMKVILFSE. A helical transmembrane segment spans residues 21 to 41; the sequence is VSVGISANSILFISHLCMFLG. The Cytoplasmic segment spans residues 42-50; the sequence is ESRPKPIDL. Residues 51–71 form a helical membrane-spanning segment; sequence YIAFFSLTHLMLLVTMGLIAV. The Extracellular segment spans residues 72-85; the sequence is DMFMPGGRWDSTTC. A disulfide bridge links Cys85 with Cys171. Residues 86–106 traverse the membrane as a helical segment; that stretch reads TFLMYLHIVLRGPTLCATCLL. The Cytoplasmic portion of the chain corresponds to 107-134; it reads NVLWTITLSPRNSCLTKFKHKSPHHISG. Residues 135–155 traverse the membrane as a helical segment; that stretch reads AFLFLCVLYMSLSSELLSITA. Topologically, residues 156 to 192 are extracellular; the sequence is SLNLTSENFLYVSQSCSILPMSYSIKSMFSTKMAIRE. Residue Asn158 is glycosylated (N-linked (GlcNAc...) asparagine). The chain crosses the membrane as a helical span at residues 193–213; that stretch reads AFLIGLMVLSSGYMVALLWSH. The Cytoplasmic portion of the chain corresponds to 214-237; it reads KKQAQHLHSNSLSLKASPEQRATR. Residues 238–258 form a helical membrane-spanning segment; it reads TIMLLMSFFVVFYILDSVIFY. Residues 259–267 are Extracellular-facing; that stretch reads SRMKFKDDS. The chain crosses the membrane as a helical span at residues 268–288; it reads IFVCVQIIVSHSYVTVSPFVF. The Cytoplasmic segment spans residues 289-309; sequence ICTEKHIIKFFWSLCGRIVNI.

It belongs to the G-protein coupled receptor 1 family.

Its subcellular location is the cell membrane. In terms of biological role, putative pheromone receptor implicated in the regulation of social and reproductive behavior. The protein is Vomeronasal type-1 receptor 46 (Vmn1r46) of Mus musculus (Mouse).